We begin with the raw amino-acid sequence, 297 residues long: Thiosulfate sulfurtransferase (297 aa).

An N6-acetyllysine; alternate modification is found at Lys-14. Position 14 is an N6-succinyllysine; alternate (Lys-14). In terms of domain architecture, Rhodanese 1 spans 25–143 (VGPGLRVLDA…WLKEGHPVTS (119 aa)). O-linked (GlcNAc) serine glycosylation is present at Ser-35. Ser-38 bears the Phosphoserine mark. At Lys-136 the chain carries N6-acetyllysine; alternate. At Lys-136 the chain carries N6-succinyllysine; alternate. The hinge stretch occupies residues 144–159 (EPSRPEPAIFKATLNR). Residue Lys-163 is modified to N6-acetyllysine. The Rhodanese 2 domain occupies 173-288 (ESKRFQLVDS…WFHRAPPETW (116 aa)). Residue Lys-175 is modified to N6-acetyllysine; alternate. Lys-175 carries the N6-succinyllysine; alternate modification. Residue Arg-187 coordinates substrate. The residue at position 224 (Lys-224) is an N6-acetyllysine; alternate. Lys-224 carries the N6-succinyllysine; alternate modification. Lys-236 carries the post-translational modification N6-acetyllysine. Residue Lys-237 is modified to N6-acetyllysine; alternate. Lys-237 carries the post-translational modification N6-succinyllysine; alternate. The Cysteine persulfide intermediate role is filled by Cys-248. Lys-250 serves as a coordination point for substrate.

In terms of assembly, monomer. In terms of tissue distribution, expressed in numerous tissues.

It localises to the mitochondrion matrix. It catalyses the reaction thiosulfate + hydrogen cyanide = thiocyanate + sulfite + 2 H(+). Its function is as follows. Together with MRPL18, acts as a mitochondrial import factor for the cytosolic 5S rRNA. Only the nascent unfolded cytoplasmic form is able to bind to the 5S rRNA. Formation of iron-sulfur complexes and cyanide detoxification. Binds molecular oxygen and sulfur. In Bos taurus (Bovine), this protein is Thiosulfate sulfurtransferase (TST).